The chain runs to 472 residues: Glutamate--tRNA ligase (472 aa).

Positions 7 to 17 (PSPTGFLHVGG) match the 'HIGH' region motif. Cys96, Cys98, Cys123, and His125 together coordinate Zn(2+). The span at 112 to 129 (ARKEKPRYDGRCRHRSEP) shows a compositional bias: basic and acidic residues. A disordered region spans residues 112 to 134 (ARKEKPRYDGRCRHRSEPPSDQP). The 'KMSKS' region signature appears at 234 to 238 (KLSKR). Residue Lys237 participates in ATP binding.

Belongs to the class-I aminoacyl-tRNA synthetase family. Glutamate--tRNA ligase type 1 subfamily. In terms of assembly, monomer. Zn(2+) is required as a cofactor.

It is found in the cytoplasm. It catalyses the reaction tRNA(Glu) + L-glutamate + ATP = L-glutamyl-tRNA(Glu) + AMP + diphosphate. Its function is as follows. Catalyzes the attachment of glutamate to tRNA(Glu) in a two-step reaction: glutamate is first activated by ATP to form Glu-AMP and then transferred to the acceptor end of tRNA(Glu). This chain is Glutamate--tRNA ligase, found in Magnetococcus marinus (strain ATCC BAA-1437 / JCM 17883 / MC-1).